Here is a 454-residue protein sequence, read N- to C-terminus: MSTTKVKRRVGKYELGRTIGEGTFAKVKFARDTETGDPVAIKILDKEKVLKHKMVEQIKREISTMKLIKHPNVVRIYEVMGSKTNIYIVLEYVTGGELFDTIVNHGRMREDEARRYFQQLINAVDYCHSRGVYHRDLKPENLLLDSYGNLKVSDFGLSALSQQIKDDGLLHTTCGTPNYVAPEVLEDQGYDGAMADLWSCGVILFVLLAGYLPFEDSNLMTLYKKISNAEFTFPPWTSFPAKRLLTRILDPNPMTRITIPEILEDEWFKKGYKRPEFDEKYDTTLDDVDAVFNDSEEHHVTEKKEEPEALNAFELISMSAGLNLGNLFDSEQEFKRETRFTSKCPPKEIVRKIEEAAKPLGFDVQKKNYKICSPCLTTICMNIPFKLRLEKVKAGRKGNLNVATEILQVAPSLHMVEVRKAKGDTLEFHKFYKNLSRTLKDVVWKSDDLQNQLS.

The 256-residue stretch at 13-268 folds into the Protein kinase domain; sequence YELGRTIGEG…IPEILEDEWF (256 aa). Residues 19-27 and Lys-42 contribute to the ATP site; that span reads IGEGTFAKV. Catalysis depends on Asp-136, which acts as the Proton acceptor. The segment at 154 to 183 is activation loop; it reads DFGLSALSQQIKDDGLLHTTCGTPNYVAPE. In terms of domain architecture, NAF spans 305–329; it reads EEPEALNAFELISMSAGLNLGNLFD. Positions 335-364 are PPI; it reads KRETRFTSKCPPKEIVRKIEEAAKPLGFDV.

The protein belongs to the protein kinase superfamily. CAMK Ser/Thr protein kinase family. SNF1 subfamily. It depends on Mn(2+) as a cofactor.

It catalyses the reaction L-seryl-[protein] + ATP = O-phospho-L-seryl-[protein] + ADP + H(+). The catalysed reaction is L-threonyl-[protein] + ATP = O-phospho-L-threonyl-[protein] + ADP + H(+). In terms of biological role, CIPK serine-threonine protein kinases interact with CBL proteins. Binding of a CBL protein to the regulatory NAF domain of CIPK protein lead to the activation of the kinase in a calcium-dependent manner. This Oryza sativa subsp. japonica (Rice) protein is CBL-interacting protein kinase 33 (CIPK33).